A 517-amino-acid chain; its full sequence is Tyrosine 3-monooxygenase (517 aa).

The residue at position 33 (S33) is a Phosphoserine; by PKA. Residues H345, H350, and E390 each coordinate Fe cation.

It belongs to the biopterin-dependent aromatic amino acid hydroxylase family. Requires Fe(2+) as cofactor.

The protein resides in the cytoplasm. It localises to the perinuclear region. Its subcellular location is the cell projection. The protein localises to the axon. It carries out the reaction (6R)-L-erythro-5,6,7,8-tetrahydrobiopterin + L-tyrosine + O2 = (4aS,6R)-4a-hydroxy-L-erythro-5,6,7,8-tetrahydrobiopterin + L-dopa. Its pathway is catecholamine biosynthesis; dopamine biosynthesis; dopamine from L-tyrosine: step 1/2. Its activity is regulated as follows. Phosphorylation leads to an increase in the catalytic activity. Functionally, involved in the synthesis of catecholamines, such as dopamine. Has a role in serotonin signaling. Required for normal explorative and foraging behavior. This chain is Tyrosine 3-monooxygenase (cat-2), found in Caenorhabditis briggsae.